The primary structure comprises 42 residues: Photosystem I reaction center subunit IX (42 aa).

A helical membrane pass occupies residues 7–27; sequence FLSTAPVLIMALLTFTAGLLI.

It belongs to the PsaJ family.

The protein resides in the cellular thylakoid membrane. May help in the organization of the PsaE and PsaF subunits. The chain is Photosystem I reaction center subunit IX from Rippkaea orientalis (strain PCC 8801 / RF-1) (Cyanothece sp. (strain PCC 8801)).